The following is a 309-amino-acid chain: Tyrosine recombinase XerD (309 aa).

Positions Met3–Tyr88 constitute a Core-binding (CB) domain. The 194-residue stretch at Pro109–Ser302 folds into the Tyr recombinase domain. Active-site residues include Arg158, Lys182, His254, Arg257, and His280. The active-site O-(3'-phospho-DNA)-tyrosine intermediate is the Tyr289.

It belongs to the 'phage' integrase family. XerD subfamily. In terms of assembly, forms a cyclic heterotetrameric complex composed of two molecules of XerC and two molecules of XerD.

The protein resides in the cytoplasm. In terms of biological role, site-specific tyrosine recombinase, which acts by catalyzing the cutting and rejoining of the recombining DNA molecules. The XerC-XerD complex is essential to convert dimers of the bacterial chromosome into monomers to permit their segregation at cell division. It also contributes to the segregational stability of plasmids. The sequence is that of Tyrosine recombinase XerD from Brucella suis biovar 1 (strain 1330).